The following is a 124-amino-acid chain: Small ribosomal subunit protein uS12 (124 aa).

Residues 1 to 24 (MPTINQLIKKPRKSQKEKTASPAL) form a disordered region. A 3-methylthioaspartic acid modification is found at aspartate 89.

Belongs to the universal ribosomal protein uS12 family. In terms of assembly, part of the 30S ribosomal subunit. Contacts proteins S8 and S17. May interact with IF1 in the 30S initiation complex.

In terms of biological role, with S4 and S5 plays an important role in translational accuracy. Its function is as follows. Interacts with and stabilizes bases of the 16S rRNA that are involved in tRNA selection in the A site and with the mRNA backbone. Located at the interface of the 30S and 50S subunits, it traverses the body of the 30S subunit contacting proteins on the other side and probably holding the rRNA structure together. The combined cluster of proteins S8, S12 and S17 appears to hold together the shoulder and platform of the 30S subunit. This Borrelia hermsii (strain HS1 / DAH) protein is Small ribosomal subunit protein uS12.